A 1133-amino-acid polypeptide reads, in one-letter code: SH3 and PX domain-containing protein 2A (1133 aa).

In terms of domain architecture, PX spans 4-128 (YCVQDATVVD…RFFEARPEDV (125 aa)). Positions 166–225 (MILEQYVVVSNYKKQENSELSLQAGEVVDVIEKNESGWWFVSTSEEQGWVPATYLEAQNG) constitute an SH3 1 domain. Threonine 256 carries the post-translational modification Phosphothreonine. In terms of domain architecture, SH3 2 spans 266–325 (SREEKYVTVQPYTSQSKDEIGFEKGVTVEVIRKNLEGWWYIRYLGKEGWAPASYLKKAKD). Residues serine 406 and serine 421 each carry the phosphoserine modification. 4 disordered regions span residues 415-446 (QRAQ…PPEP), 505-840 (RKKP…EWEG), 899-924 (NEQP…GKSD), and 941-964 (QSKK…SGTP). The 60-residue stretch at 448-507 (SVEVEYYTIAEFQSCISDGISFRGGQKAEVIDKNSGGWWYVQIGEKEGWAPASYIDKRKK) folds into the SH3 3 domain. The segment covering 546 to 555 (DSPRKLKYEE) has biased composition (basic and acidic residues). Phosphoserine is present on residues serine 547 and serine 567. Positions 567-576 (SEPELSEEPV) are enriched in acidic residues. Residues 577–586 (EDRASGERRP) show a composition bias toward basic and acidic residues. Serine 593 carries the post-translational modification Phosphoserine. A compositionally biased stretch (acidic residues) spans 608 to 620 (SSEDVALEEETIY). Composition is skewed to low complexity over residues 634–652 (SARG…SLSL), 658–670 (PKSG…SLLK), and 686–715 (SSAS…SKTS). Serine 644 is subject to Phosphoserine. Residue threonine 731 is modified to Phosphothreonine. Phosphoserine occurs at positions 767, 769, and 819. The residue at position 829 (threonine 829) is a Phosphothreonine. Residues 840–899 (GPATSYMTCSAYQKVQDSEISFPAGVEVQVLEKQESGWWYVRFGELEGWAPSHYLVLDEN) form the SH3 4 domain. A coiled-coil region spans residues 917 to 946 (RQNEGKSDSLEKIERRVQALNTVNQSKKAT). Serine 1002, serine 1016, serine 1017, and serine 1038 each carry phosphoserine. The tract at residues 1029 to 1059 (KGRLAERAASQGSDSPLLPAQRNSIPVSPVR) is disordered. One can recognise an SH3 5 domain in the interval 1072-1133 (NLKDVYVSIA…VPSNYLEKKN (62 aa)).

The protein belongs to the SH3PXD2 family. As to quaternary structure, interacts (via N-terminus) with CYBA. Interacts with ADAM12, ADAM15 and ADAM19. Interacts with NOXO1. Interacts (via SH3 domains) with NOXA1. Interacts with FASLG. Interacts (via PX domain) with RAB40B (GTP-bound); interaction promotes invadopodia-mediated extracellular matrix degradation. Post-translationally, tyrosine phosphorylated by SRC. Phosphorylation plays a regulatory role in the protein localization. The intramolecular interaction of the PX domain with the third SH3 domain maintains the protein in the cytoplasm and phosphorylation disrupts this interaction, resulting in the redistribution of the protein from cytoplasm to the perimembrane region. Phosphorylated on serine upon DNA damage, probably by ATM or ATR. In terms of tissue distribution, found in several cancer cell lines, particularly invasive breast carcinomas and melanomas.

The protein resides in the cytoplasm. The protein localises to the cell projection. It localises to the podosome. Functionally, adapter protein involved in invadopodia and podosome formation, extracellular matrix degradation and invasiveness of some cancer cells. Binds matrix metalloproteinases (ADAMs), NADPH oxidases (NOXs) and phosphoinositides. Acts as an organizer protein that allows NOX1- or NOX3-dependent reactive oxygen species (ROS) generation and ROS localization. In association with ADAM12, mediates the neurotoxic effect of amyloid-beta peptide. This chain is SH3 and PX domain-containing protein 2A, found in Homo sapiens (Human).